A 172-amino-acid chain; its full sequence is Small ribosomal subunit protein uS13 (172 aa).

Residues 131–172 (GQRTRTTGRTGVTVGVRRSKAAQAAQQQQKAQASSGGEKKQG) form a disordered region. The span at 134 to 163 (TRTTGRTGVTVGVRRSKAAQAAQQQQKAQA) shows a compositional bias: low complexity.

It belongs to the universal ribosomal protein uS13 family. Part of the 30S ribosomal subunit. Forms a loose heterodimer with protein S19. Forms two bridges to the 50S subunit in the 70S ribosome.

Functionally, located at the top of the head of the 30S subunit, it contacts several helices of the 16S rRNA. In the 70S ribosome it contacts the 23S rRNA (bridge B1a) and protein L5 of the 50S subunit (bridge B1b), connecting the 2 subunits; these bridges are implicated in subunit movement. This is Small ribosomal subunit protein uS13 from Sulfurisphaera tokodaii (strain DSM 16993 / JCM 10545 / NBRC 100140 / 7) (Sulfolobus tokodaii).